Reading from the N-terminus, the 91-residue chain is Cell division topological specificity factor (91 aa).

The protein belongs to the MinE family.

Its function is as follows. Prevents the cell division inhibition by proteins MinC and MinD at internal division sites while permitting inhibition at polar sites. This ensures cell division at the proper site by restricting the formation of a division septum at the midpoint of the long axis of the cell. In Erwinia tasmaniensis (strain DSM 17950 / CFBP 7177 / CIP 109463 / NCPPB 4357 / Et1/99), this protein is Cell division topological specificity factor.